A 193-amino-acid polypeptide reads, in one-letter code: Ion-translocating oxidoreductase complex subunit A (193 aa).

6 consecutive transmembrane segments (helical) span residues 5–25 (LLLL…FLGL), 39–59 (MGMG…AWAV), 62–82 (FILV…LVIA), 102–122 (LLGI…VALL), 134–154 (AVYG…FAAI), and 171–191 (SIAL…SGLV).

This sequence belongs to the NqrDE/RnfAE family. As to quaternary structure, the complex is composed of six subunits: RnfA, RnfB, RnfC, RnfD, RnfE and RnfG.

The protein resides in the cell inner membrane. Its function is as follows. Part of a membrane-bound complex that couples electron transfer with translocation of ions across the membrane. This Edwardsiella ictaluri (strain 93-146) protein is Ion-translocating oxidoreductase complex subunit A.